The primary structure comprises 328 residues: dTDP-3,4-didehydro-2,6-dideoxy-alpha-D-glucose 3-reductase (328 aa).

R20 is a binding site for substrate. Residues 38–39, L75, and H80 each bind NADP(+); that span reads SR. K98 functions as the Proton donor in the catalytic mechanism. Residues R166 and D178 each coordinate NADP(+). 2 residues coordinate substrate: Y236 and T256.

It belongs to the Gfo/Idh/MocA family.

It carries out the reaction dTDP-4-dehydro-2,6-dideoxy-alpha-D-glucose + NADP(+) = dTDP-3,4-didehydro-2,6-dideoxy-alpha-D-glucose + NADPH + H(+). Its pathway is antibiotic biosynthesis. Functionally, involved in the biosynthesis of one of the two 2,6-deoxysugars, dTDP-L-oleandrose, attached to the macrolactone ring oleandolide to produce the aglycone antibiotic oleandomycin. Catalyzes the reduction of the C-3 keto moiety of dTDP-3,4-diketo-2,6-dideoxy-alpha-D-glucose to yield dTDP-4-keto-2,6-dideoxy-alpha-D-glucose. NADPH is the better reductant, however NADH can also be used. In Streptomyces antibioticus, this protein is dTDP-3,4-didehydro-2,6-dideoxy-alpha-D-glucose 3-reductase.